The sequence spans 147 residues: Alpha-amylase/trypsin inhibitor (147 aa).

Residues 1-21 (MASDHRRFVLSGAVLLSVLAV) form the signal peptide.

The protein belongs to the protease inhibitor I6 (cereal trypsin/alpha-amylase inhibitor) family. Five disulfide bonds, which are essential for the inhibitor activity, are probably present. Endosperm.

It is found in the secreted. In terms of biological role, alpha-amylase/trypsin inhibitor. This is Alpha-amylase/trypsin inhibitor from Hordeum vulgare (Barley).